Here is a 523-residue protein sequence, read N- to C-terminus: Peptide chain release factor 3 (523 aa).

In terms of domain architecture, tr-type G spans 10–277 (NKRRTFAIIS…QFVDLAPAPG (268 aa)). Residues 19–26 (SHPDAGKT), 87–91 (DTPGH), and 141–144 (NKLD) each bind GTP.

Belongs to the TRAFAC class translation factor GTPase superfamily. Classic translation factor GTPase family. PrfC subfamily.

It localises to the cytoplasm. Increases the formation of ribosomal termination complexes and stimulates activities of RF-1 and RF-2. It binds guanine nucleotides and has strong preference for UGA stop codons. It may interact directly with the ribosome. The stimulation of RF-1 and RF-2 is significantly reduced by GTP and GDP, but not by GMP. In Lactobacillus delbrueckii subsp. bulgaricus (strain ATCC BAA-365 / Lb-18), this protein is Peptide chain release factor 3.